A 153-amino-acid polypeptide reads, in one-letter code: RNA-binding protein 3 (153 aa).

One can recognise an RRM domain in the interval Gly-6–Lys-84. Omega-N-methylarginine is present on Arg-47. The interval His-81 to Asn-153 is disordered. A compositionally biased stretch (gly residues) spans Ser-89–Ser-112. Arg-103 carries the asymmetric dimethylarginine; alternate modification. Arg-103 carries the dimethylated arginine; alternate modification. An Omega-N-methylarginine; alternate modification is found at Arg-103. Omega-N-methylarginine is present on residues Arg-118 and Arg-128. A phosphoserine mark is found at Ser-133 and Ser-143. Phosphotyrosine is present on Tyr-151.

Interacts with RPL4. Associates with the 60S ribosomal subunits in an RNA-independent manner. Arg-103 is dimethylated, probably to asymmetric dimethylarginine. In terms of processing, phosphorylated.

The protein localises to the nucleus. The protein resides in the cytoplasm. Its subcellular location is the cell projection. It is found in the dendrite. Functionally, cold-inducible mRNA binding protein that enhances global protein synthesis at both physiological and mild hypothermic temperatures. Reduces the relative abundance of microRNAs, when overexpressed. Enhances phosphorylation of translation initiation factors and active polysome formation. This is RNA-binding protein 3 (Rbm3) from Mus musculus (Mouse).